Consider the following 409-residue polypeptide: Elongation factor Tu, plastid (409 aa).

In terms of domain architecture, tr-type G spans 10-214 (KPHINIGTIG…KIDSYIPTPI (205 aa)). Residues 19-26 (GHVDHGKT) form a G1 region. A GTP-binding site is contributed by 19–26 (GHVDHGKT). Thr-26 serves as a coordination point for Mg(2+). Positions 60-64 (GITIN) are G2. The tract at residues 81-84 (DCPG) is G3. Residues 81 to 85 (DCPGH) and 136 to 139 (NKED) each bind GTP. The interval 136-139 (NKED) is G4. The G5 stretch occupies residues 174–176 (SAL).

Belongs to the TRAFAC class translation factor GTPase superfamily. Classic translation factor GTPase family. EF-Tu/EF-1A subfamily.

Its subcellular location is the plastid. It carries out the reaction GTP + H2O = GDP + phosphate + H(+). Its function is as follows. GTP hydrolase that promotes the GTP-dependent binding of aminoacyl-tRNA to the A-site of ribosomes during protein biosynthesis. This chain is Elongation factor Tu, plastid (tufA), found in Euglena longa (Euglenophycean alga).